The following is a 527-amino-acid chain: Cytochrome P450 monooxygenase olcJ (527 aa).

A helical membrane pass occupies residues 21–43 (GLLTRYNVFMAISITVTALYLIH). Residue cysteine 464 participates in heme binding.

The protein belongs to the cytochrome P450 family. Heme serves as cofactor.

It localises to the membrane. It participates in secondary metabolite biosynthesis; terpenoid biosynthesis. Its function is as follows. Cytochrome P450 monooxygenase; part of the gene cluster that mediates the biosynthesis of 15-deoxyoxalicine B. The first step of the pathway is the synthesis of nicotinyl-CoA from nicotinic acid by the nicotinic acid-CoA ligase olcI. Nicotinyl-CoA is then a substrate of polyketide synthase olcA to produce 4-hydroxy-6-(3-pyridinyl)-2H-pyran-2-one (HPPO) which is further prenylated by the polyprenyl transferase olcH to yield geranylgeranyl-HPPO. Geranylgeranyl pyrophosphate is provided by the cluster-specific geranylgeranyl pyrophosphate synthase olcC. The FAD-dependent monooxygenase olcE catalyzes the epoxidation of geranylgeranyl-HPPO and the terpene cyclase olcD catalyzes the cyclization of the terpenoid component, resulting in the formation of the tricyclic terpene moiety seen in predecaturin E. The cytochrome P450 monooxygenase then catalyzes the allylic oxidation of predecaturin E, which is followed by spirocylization with concomitant loss of one molecule of water to form decaturin E. Decaturin E is the substrate of the cytochrome P450 monooxygenase olcJ which hydroxylates it at the C-29 position to form decaturin F. The short-chain dehydrogenase/reductase olcF may catalyze the oxidation of decaturin F to generate the 29-hydroxyl-27-one intermediate, and subsequent hemiacetal formation probably leads to the formation of decaturin C. The dioxygenase olcK may be a peroxisomal enzyme that catalyzes the hydroxylation of decaturin C into decaturin A once decaturin C is shuttled into the peroxisome by the MFS transporter olcL. Finally the cytochrome P450 monooxygenase olcB catalyzes the oxidative rearrangement to yield 15-deoxyoxalicine B. In the absence of olcJ, decaturin E may be shunted to a pathway in which it is oxidized to a ketone, possibly by olcF, to form decaturin D, which undergoes further allylic oxidation to yield decaturin G. Moreover, in the absence of oclK or oclL, oclB can convert decaturin C into 15-deoxyoxalicine A. This Penicillium canescens protein is Cytochrome P450 monooxygenase olcJ.